Consider the following 267-residue polypeptide: L-aspartate dehydrogenase (267 aa).

NAD(+) contacts are provided by Ala124 and Asn190. His218 is a catalytic residue.

Belongs to the L-aspartate dehydrogenase family.

The catalysed reaction is L-aspartate + NADP(+) + H2O = oxaloacetate + NH4(+) + NADPH + H(+). It catalyses the reaction L-aspartate + NAD(+) + H2O = oxaloacetate + NH4(+) + NADH + H(+). Its pathway is cofactor biosynthesis; NAD(+) biosynthesis; iminoaspartate from L-aspartate (dehydrogenase route): step 1/1. Its function is as follows. Specifically catalyzes the NAD or NADP-dependent dehydrogenation of L-aspartate to iminoaspartate. The chain is L-aspartate dehydrogenase from Methanocaldococcus jannaschii (strain ATCC 43067 / DSM 2661 / JAL-1 / JCM 10045 / NBRC 100440) (Methanococcus jannaschii).